Consider the following 159-residue polypeptide: Defense protein l(2)34Fc (159 aa).

An N-terminal signal peptide occupies residues Met-1 to Ala-17. The Reelin domain maps to Tyr-18–Glu-159. A disulfide bridge connects residues Cys-27 and Cys-99.

The protein belongs to the insect defense protein family.

The protein resides in the secreted. Its function is as follows. May have antimicrobial activity. A late response immune regulated gene that is negatively regulated by spz during the immune response. The protein is Defense protein l(2)34Fc (l(2)34Fc) of Drosophila melanogaster (Fruit fly).